We begin with the raw amino-acid sequence, 651 residues long: Acetyl-coenzyme A synthetase (651 aa).

CoA-binding positions include 189 to 192 (RGGK), Thr-311, and Asn-335. Residues 387 to 389 (GEP), 411 to 416 (DTWWQT), Asp-500, and Arg-515 each bind ATP. CoA is bound at residue Ser-523. Residue Arg-526 participates in ATP binding. 3 residues coordinate Mg(2+): Val-537, His-539, and Val-542. Arg-586 provides a ligand contact to CoA. Lys-611 carries the post-translational modification N6-acetyllysine.

This sequence belongs to the ATP-dependent AMP-binding enzyme family. The cofactor is Mg(2+). In terms of processing, acetylated. Deacetylation by the SIR2-homolog deacetylase activates the enzyme.

The enzyme catalyses acetate + ATP + CoA = acetyl-CoA + AMP + diphosphate. Functionally, catalyzes the conversion of acetate into acetyl-CoA (AcCoA), an essential intermediate at the junction of anabolic and catabolic pathways. AcsA undergoes a two-step reaction. In the first half reaction, AcsA combines acetate with ATP to form acetyl-adenylate (AcAMP) intermediate. In the second half reaction, it can then transfer the acetyl group from AcAMP to the sulfhydryl group of CoA, forming the product AcCoA. The sequence is that of Acetyl-coenzyme A synthetase from Brucella melitensis biotype 1 (strain ATCC 23456 / CCUG 17765 / NCTC 10094 / 16M).